A 337-amino-acid polypeptide reads, in one-letter code: Anthranilate phosphoribosyltransferase (337 aa).

Residues G81, 84–85, S89, 91–94, 109–117, and A121 contribute to the 5-phospho-alpha-D-ribose 1-diphosphate site; these read GD, NVST, and KHGNRAASS. G81 is an anthranilate binding site. S93 is a binding site for Mg(2+). N112 lines the anthranilate pocket. R167 lines the anthranilate pocket. Residues D226 and E227 each contribute to the Mg(2+) site.

Belongs to the anthranilate phosphoribosyltransferase family. As to quaternary structure, homodimer. Requires Mg(2+) as cofactor.

The catalysed reaction is N-(5-phospho-beta-D-ribosyl)anthranilate + diphosphate = 5-phospho-alpha-D-ribose 1-diphosphate + anthranilate. It participates in amino-acid biosynthesis; L-tryptophan biosynthesis; L-tryptophan from chorismate: step 2/5. In terms of biological role, catalyzes the transfer of the phosphoribosyl group of 5-phosphorylribose-1-pyrophosphate (PRPP) to anthranilate to yield N-(5'-phosphoribosyl)-anthranilate (PRA). In Methylobacterium nodulans (strain LMG 21967 / CNCM I-2342 / ORS 2060), this protein is Anthranilate phosphoribosyltransferase.